The chain runs to 404 residues: Glycerol-1-phosphate dehydrogenase [NAD(P)+] (404 aa).

NAD(+) is bound by residues Asp55, 117–121 (GTVHD), and 139–142 (TAPS). Asp144 is a substrate binding site. Residue Ser148 participates in NAD(+) binding. Residue Asp191 participates in substrate binding. Asp191 and His271 together coordinate Ni(2+). Residue His275 participates in substrate binding. His291 serves as a coordination point for Ni(2+).

It belongs to the glycerol-1-phosphate dehydrogenase family. In terms of assembly, homodimer. Ni(2+) serves as cofactor.

Its subcellular location is the cytoplasm. It carries out the reaction sn-glycerol 1-phosphate + NAD(+) = dihydroxyacetone phosphate + NADH + H(+). The enzyme catalyses sn-glycerol 1-phosphate + NADP(+) = dihydroxyacetone phosphate + NADPH + H(+). Catalyzes the NAD(P)H-dependent reduction of dihydroxyacetonephosphate (DHAP or glycerone phosphate) to glycerol 1-phosphate (G1P). The G1P thus generated is probably used for the synthesis of phosphoglycerolipids in Gram-positive bacterial species. The sequence is that of Glycerol-1-phosphate dehydrogenase [NAD(P)+] from Geobacillus thermodenitrificans (strain NG80-2).